Consider the following 257-residue polypeptide: MPVSETTDRQASNGGDGPALPINELFYSLQGEGKLAGTPSVFVRTSGCNLRCWFCDSYHTSWEPTHATMSVDDIIAEVQSYEHADHVVLTGGEPLLHDDAVVLLDRLAALGYHTTVETNGTIHRDAPIDLASVSPKLASSTPTAETDPKGDGEWAARHDARRIDVATLGALADDYDTQLKFVVTDPSDMPEIESLLAEIRTATDTRIGDEDVVLMPEGTTHAELDARRNEVATLAMEHGYRYTPRLHVALWNDAPET.

Residues 29-31 and Arg44 each bind substrate; that span reads LQG. The Radical SAM core domain maps to 35–253; that stretch reads LAGTPSVFVR…PRLHVALWND (219 aa). Residues Cys48, Cys52, and Cys55 each contribute to the [4Fe-4S] cluster site. Ser57 serves as a coordination point for Mg(2+). Substrate is bound at residue Thr90. Gly92 is an S-adenosyl-L-methionine binding site. The interval 133 to 153 is disordered; the sequence is VSPKLASSTPTAETDPKGDGE.

Belongs to the radical SAM superfamily. 7-carboxy-7-deazaguanine synthase family. Homodimer. [4Fe-4S] cluster serves as cofactor. The cofactor is S-adenosyl-L-methionine. Mg(2+) is required as a cofactor.

It carries out the reaction 6-carboxy-5,6,7,8-tetrahydropterin + H(+) = 7-carboxy-7-deazaguanine + NH4(+). It functions in the pathway purine metabolism; 7-cyano-7-deazaguanine biosynthesis. Catalyzes the complex heterocyclic radical-mediated conversion of 6-carboxy-5,6,7,8-tetrahydropterin (CPH4) to 7-carboxy-7-deazaguanine (CDG), a step common to the biosynthetic pathways of all 7-deazapurine-containing compounds. This chain is 7-carboxy-7-deazaguanine synthase, found in Halobacterium salinarum (strain ATCC 29341 / DSM 671 / R1).